The chain runs to 72 residues: Seed trypsin/chymotrypsin inhibitor IVB (72 aa).

7 disulfides stabilise this stretch: cysteine 8–cysteine 61, cysteine 9–cysteine 24, cysteine 12–cysteine 57, cysteine 14–cysteine 22, cysteine 31–cysteine 38, cysteine 35–cysteine 50, and cysteine 40–cysteine 48.

It belongs to the Bowman-Birk serine protease inhibitor family. Seed.

Functionally, inhibitor of trypsin and of chymotrypsin. May function as a natural phytochemical defense against predators. This chain is Seed trypsin/chymotrypsin inhibitor IVB, found in Pisum sativum (Garden pea).